Reading from the N-terminus, the 329-residue chain is Deoxyhypusine hydroxylase (329 aa).

4 HEAT-like PBS-type repeats span residues 65–91 (LKHE…VLED), 99–124 (RHEA…MRDD), 232–258 (FRHE…ALSN), and 265–292 (VRHE…FLND). Residues H67, E68, H100, E101, H234, E235, H267, and E268 each coordinate Fe cation.

It belongs to the deoxyhypusine hydroxylase family. Fe(2+) serves as cofactor.

Its subcellular location is the cytoplasm. It localises to the nucleus. The catalysed reaction is [eIF5A protein]-deoxyhypusine + AH2 + O2 = [eIF5A protein]-hypusine + A + H2O. The protein operates within protein modification; eIF5A hypusination. Functionally, catalyzes the hydroxylation of the N(6)-(4-aminobutyl)-L-lysine intermediate to form hypusine, an essential post-translational modification only found in mature eIF-5A factor. In Phaeosphaeria nodorum (strain SN15 / ATCC MYA-4574 / FGSC 10173) (Glume blotch fungus), this protein is Deoxyhypusine hydroxylase.